The chain runs to 807 residues: Glycerol-3-phosphate acyltransferase (807 aa).

The HXXXXD motif motif lies at 305–310 (CHRSHM).

It belongs to the GPAT/DAPAT family.

The protein resides in the cell inner membrane. It carries out the reaction sn-glycerol 3-phosphate + an acyl-CoA = a 1-acyl-sn-glycero-3-phosphate + CoA. It functions in the pathway phospholipid metabolism; CDP-diacylglycerol biosynthesis; CDP-diacylglycerol from sn-glycerol 3-phosphate: step 1/3. The polypeptide is Glycerol-3-phosphate acyltransferase (Aliivibrio fischeri (strain ATCC 700601 / ES114) (Vibrio fischeri)).